The primary structure comprises 178 residues: Protein modigliani (178 aa).

In terms of assembly, probably homodimerizes. Component of the MTV complex, composed of moi/modigliani, tea and ver/verrocchio. Interacts with ver/verrochio and tea (via C-terminus); the interactions are direct and require fully intact moi/modigliani and ver/verrocchio. The MTV complex is recruited to telomeres by the HipHop-HOAP complex, consisting of HipHop, cav/HOAP and Su(var)205/HP1 to form the terminin telomere-capping complex. Interacts with cav/HOAP and Su(var)205/HP1; the interactions are direct. Probably interacts with peo (via N-terminus and UBC domain).

The protein resides in the nucleus. It is found in the chromosome. The protein localises to the telomere. Part of the MTV complex that associates with the HipHop-HOAP complex to form the terminin telomere-capping complex involved in telomere maintenance and prevention of telomere fusion. Potentially functions downstream of mei-41/ATR. As part of the MTV complex binds single stranded DNA in a sequence-independent manner, protecting it from degradation. This is Protein modigliani from Drosophila melanogaster (Fruit fly).